The chain runs to 450 residues: ATP-dependent protease ATPase subunit HslU (450 aa).

ATP-binding positions include Val29, Gly71 to Glu76, Asp261, Glu328, and Arg400.

The protein belongs to the ClpX chaperone family. HslU subfamily. In terms of assembly, a double ring-shaped homohexamer of HslV is capped on each side by a ring-shaped HslU homohexamer. The assembly of the HslU/HslV complex is dependent on binding of ATP.

The protein localises to the cytoplasm. In terms of biological role, ATPase subunit of a proteasome-like degradation complex; this subunit has chaperone activity. The binding of ATP and its subsequent hydrolysis by HslU are essential for unfolding of protein substrates subsequently hydrolyzed by HslV. HslU recognizes the N-terminal part of its protein substrates and unfolds these before they are guided to HslV for hydrolysis. This Rickettsia rickettsii (strain Iowa) protein is ATP-dependent protease ATPase subunit HslU.